The chain runs to 669 residues: DNA mismatch repair protein MutL (669 aa).

A disordered region spans residues 343 to 408; it reads SAFHRAEPEE…RAPSDSSVRE (66 aa). A compositionally biased stretch (basic and acidic residues) spans 344 to 356; the sequence is AFHRAEPEERESQ. Over residues 357–372 the composition is skewed to polar residues; it reads PETTPQYSPQSVSTTV. Positions 390–408 are enriched in basic and acidic residues; that stretch reads TDYEIKPRDRAPSDSSVRE.

The protein belongs to the DNA mismatch repair MutL/HexB family.

In terms of biological role, this protein is involved in the repair of mismatches in DNA. It is required for dam-dependent methyl-directed DNA mismatch repair. May act as a 'molecular matchmaker', a protein that promotes the formation of a stable complex between two or more DNA-binding proteins in an ATP-dependent manner without itself being part of a final effector complex. In Vibrio parahaemolyticus serotype O3:K6 (strain RIMD 2210633), this protein is DNA mismatch repair protein MutL.